An 81-amino-acid polypeptide reads, in one-letter code: Large ribosomal subunit protein bL31B (81 aa).

It belongs to the bacterial ribosomal protein bL31 family. Type B subfamily. Part of the 50S ribosomal subunit.

The protein is Large ribosomal subunit protein bL31B of Halalkalibacterium halodurans (strain ATCC BAA-125 / DSM 18197 / FERM 7344 / JCM 9153 / C-125) (Bacillus halodurans).